We begin with the raw amino-acid sequence, 1053 residues long: Protein CLEC16A (1053 aa).

The FPL domain maps to 51–198; that stretch reads IRSITEILIW…AVRTITLNVY (148 aa). Disordered stretches follow at residues 375–434, 452–471, and 892–983; these read SLEM…GESE, STSVQEQNTTDEEKSAAATC, and SSPS…SPSL. Residues 381–392 show a composition bias toward basic residues; sequence HKGKRRVQKRPN. Positions 892–938 are enriched in low complexity; sequence SSPSLSSQSPPSASGSPSGSGSTSHCDSGGTSSSSTPSTAQSPADAP.

This sequence belongs to the CLEC16A/gop-1 family. As to quaternary structure, interacts with RNF41/NRDP1. In terms of tissue distribution, almost exclusively expressed in immune cells, including dendritic cells, B-lymphocytes and natural killer cells.

It is found in the endosome membrane. The protein resides in the lysosome membrane. In terms of biological role, regulator of mitophagy through the upstream regulation of the RNF41/NRDP1-PRKN pathway. Mitophagy is a selective form of autophagy necessary for mitochondrial quality control. The RNF41/NRDP1-PRKN pathway regulates autophagosome-lysosome fusion during late mitophagy. May protect RNF41/NRDP1 from proteasomal degradation, RNF41/NRDP1 which regulates proteasomal degradation of PRKN. Plays a key role in beta cells functions by regulating mitophagy/autophagy and mitochondrial health. This Homo sapiens (Human) protein is Protein CLEC16A.